Reading from the N-terminus, the 299-residue chain is Cathepsin B-like CP3 (299 aa).

The signal sequence occupies residues M1–S19. Disulfide bonds link C87-C114, C97-C140, and C133-C176. C100 is an active-site residue. Active-site residues include H244 and N265.

The protein belongs to the peptidase C1 family.

The protein resides in the vacuole. In terms of biological role, thiol protease which is required for parasite excystation and invasion of the proximal small intestine of the human host. In Giardia intestinalis (Giardia lamblia), this protein is Cathepsin B-like CP3 (CP3).